The primary structure comprises 197 residues: Guanylate kinase (197 aa).

Residues 6–191 (SKLIILSGPS…CVAQIEKIIS (186 aa)) enclose the Guanylate kinase-like domain. ATP is bound at residue 13–20 (GPSGVGKG).

The protein belongs to the guanylate kinase family.

Its subcellular location is the cytoplasm. The enzyme catalyses GMP + ATP = GDP + ADP. Essential for recycling GMP and indirectly, cGMP. This Mesomycoplasma hyopneumoniae (strain 232) (Mycoplasma hyopneumoniae) protein is Guanylate kinase.